An 84-amino-acid chain; its full sequence is Magnetosome protein MamG (84 aa).

Residues 1 to 3 lie on the Cytoplasmic side of the membrane; sequence MIK. Residues 4-24 traverse the membrane as a helical segment; it reads GIAGVGGTALGVGGGVAAPPV. The Lumenal segment spans residues 25–40; that stretch reads SAAAVGSTLLAGKGVC. Positions 41 to 48 are LG repeat; that stretch reads LGLGLGLG. The helical transmembrane segment at 41 to 61 threads the bilayer; the sequence is LGLGLGLGAWGPVLLGVAGLA. Residues 62 to 84 lie on the Cytoplasmic side of the membrane; the sequence is CAASLCDYLKNRKAQAEASAEPA.

The protein belongs to the magnetosome MamG (TC 9.B.95) protein family.

The protein localises to the magnetosome membrane. Its function is as follows. Plays a role in regulating magnetite crystal size. This is Magnetosome protein MamG from Magnetospirillum gryphiswaldense (strain DSM 6361 / JCM 21280 / NBRC 15271 / MSR-1).